A 130-amino-acid chain; its full sequence is Lysozyme C (130 aa).

Residues 1–130 (KTYERCELAR…VSPWIRDCGL (130 aa)) form the C-type lysozyme domain. 4 disulfides stabilise this stretch: C6–C128, C30–C116, C65–C81, and C77–C95. Active-site residues include E35 and D53.

The protein belongs to the glycosyl hydrolase 22 family. As to quaternary structure, monomer.

It localises to the secreted. It catalyses the reaction Hydrolysis of (1-&gt;4)-beta-linkages between N-acetylmuramic acid and N-acetyl-D-glucosamine residues in a peptidoglycan and between N-acetyl-D-glucosamine residues in chitodextrins.. Functionally, lysozymes have primarily a bacteriolytic function; those in tissues and body fluids are associated with the monocyte-macrophage system and enhance the activity of immunoagents. The protein is Lysozyme C (LYZ) of Chelonia mydas (Green sea-turtle).